The primary structure comprises 209 residues: Uracil phosphoribosyltransferase (209 aa).

5-phospho-alpha-D-ribose 1-diphosphate is bound by residues R78, R103, and D130–T138. Residues I193 and G198–A200 each bind uracil. A 5-phospho-alpha-D-ribose 1-diphosphate-binding site is contributed by D199.

It belongs to the UPRTase family. Requires Mg(2+) as cofactor.

The enzyme catalyses UMP + diphosphate = 5-phospho-alpha-D-ribose 1-diphosphate + uracil. It functions in the pathway pyrimidine metabolism; UMP biosynthesis via salvage pathway; UMP from uracil: step 1/1. With respect to regulation, allosterically activated by GTP. Catalyzes the conversion of uracil and 5-phospho-alpha-D-ribose 1-diphosphate (PRPP) to UMP and diphosphate. This Campylobacter fetus subsp. fetus (strain 82-40) protein is Uracil phosphoribosyltransferase.